Reading from the N-terminus, the 346-residue chain is Histone PARylation factor 1 (346 aa).

Position 1 is an N-acetylmethionine (methionine 1). N6-acetyllysine is present on residues lysine 19, lysine 186, and lysine 233. A PolyADP-ribosyl aspartic acid modification is found at aspartate 235. Residue tyrosine 238 is modified to ADP-ribosyltyrosine. Glutamate 240 is modified (polyADP-ribosyl glutamic acid). The interaction with PARP1 stretch occupies residues proline 242–glycine 346. Glutamate 284 serves as the catalytic Proton donor.

Belongs to the HPF1 family. In terms of assembly, interacts with PARP1 (via the PARP catalytic domain). Interacts with PARP2 (via the PARP catalytic domain). Interacts with core nucleosomes in a PARP1- and PARP2-dependent manner.

Its subcellular location is the chromosome. It is found in the nucleus. Cofactor for serine ADP-ribosylation that confers serine specificity on PARP1 and PARP2 and plays a key role in DNA damage response. Initiates the repair of double-strand DNA breaks: recruited to DNA damage sites by PARP1 and PARP2 and switches the amino acid specificity of PARP1 and PARP2 from aspartate or glutamate to serine residues, licensing serine ADP-ribosylation of target proteins. Serine ADP-ribosylation of target proteins, such as histones, promotes decompaction of chromatin and the recruitment of repair factors leading to the reparation of DNA strand breaks. Serine ADP-ribosylation of proteins constitutes the primary form of ADP-ribosylation of proteins in response to DNA damage. HPF1 acts by completing the active site of PARP1 and PARP2: forms a composite active site composed of residues from HPF1 and PARP1 or PARP2. While HPF1 promotes the initiation of serine ADP-ribosylation, it restricts the polymerase activity of PARP1 and PARP2 in order to limit the length of poly-ADP-ribose chains. HPF1 also promotes tyrosine ADP-ribosylation, probably by conferring tyrosine specificity on PARP1. The polypeptide is Histone PARylation factor 1 (Mus musculus (Mouse)).